The sequence spans 306 residues: MPAVAPSAAESRHSNTFLRLKKKLERGVGEAIADYNMIGDGDTVMVCVSGGKDSYTLLSCLLALRERAPVDFRIVAMNLDQKQPGFPDDVLPAYFESIGVEYRIVTEDTYSIVKDKIPEGKTTCSLCSRLRRGIIYRTAKEIGATRIALGHHRDDMLETLFLNMFFGGKIKAMPPKLVSDDGQHVVIRPLAYCTENDIERFARGMDFPIIPCNLCGSQENAQRKQIKTMLQGWARDYPGRIESLATSLRNVVPSHLSDSALFDFVGLTRDTRVGEGDTVFDPPELPAAAAPITLRRADDDGDRSAT.

The short motif at 49–54 (SGGKDS) is the PP-loop motif element. [4Fe-4S] cluster contacts are provided by Cys-124, Cys-127, and Cys-215.

This sequence belongs to the TtcA family. In terms of assembly, homodimer. The cofactor is Mg(2+). It depends on [4Fe-4S] cluster as a cofactor.

It localises to the cytoplasm. It catalyses the reaction cytidine(32) in tRNA + S-sulfanyl-L-cysteinyl-[cysteine desulfurase] + AH2 + ATP = 2-thiocytidine(32) in tRNA + L-cysteinyl-[cysteine desulfurase] + A + AMP + diphosphate + H(+). It functions in the pathway tRNA modification. Functionally, catalyzes the ATP-dependent 2-thiolation of cytidine in position 32 of tRNA, to form 2-thiocytidine (s(2)C32). The sulfur atoms are provided by the cysteine/cysteine desulfurase (IscS) system. In Azoarcus sp. (strain BH72), this protein is tRNA-cytidine(32) 2-sulfurtransferase.